The primary structure comprises 81 residues: Antitoxin VapB20 (81 aa).

Its function is as follows. Antitoxin component of a type II toxin-antitoxin (TA) system. Neutralizes the toxic effect of cognate toxin VapC20. The polypeptide is Antitoxin VapB20 (vapB20) (Mycobacterium tuberculosis (strain CDC 1551 / Oshkosh)).